A 433-amino-acid polypeptide reads, in one-letter code: Oxaloacetate decarboxylase beta chain 2 (433 aa).

10 consecutive transmembrane segments (helical) span residues 16 to 36 (LGAG…LAIA), 42 to 62 (LLLL…AGMA), 122 to 142 (VLAL…VIFM), 168 to 188 (FGIF…LIAF), 190 to 210 (LPQA…AIYL), 216 to 236 (PELL…VPLI), 266 to 286 (ILFP…AAPL), 311 to 331 (NGLI…KLVA), 340 to 360 (LGIL…GVLM), and 413 to 433 (VAGV…VLAM).

It belongs to the GcdB/MmdB/OadB family. In terms of assembly, heterotrimer of an alpha, a beta and a gamma subunit. Requires Na(+) as cofactor.

Its subcellular location is the cell membrane. The enzyme catalyses oxaloacetate + 2 Na(+)(in) + H(+) = pyruvate + 2 Na(+)(out) + CO2. In terms of biological role, catalyzes the decarboxylation of oxaloacetate coupled to Na(+) translocation. This Salmonella typhi protein is Oxaloacetate decarboxylase beta chain 2 (oadB2).